Here is a 134-residue protein sequence, read N- to C-terminus: Spermadhesin-1 (134 aa).

A signal peptide spans 1–20 (MKLSSVIPWALLLSTATVDS). Disulfide bonds link C30-C51 and C74-C95. The 102-residue stretch at 30–131 (CGGILKEESG…SFYEVLYFQD (102 aa)) folds into the CUB domain.

The protein belongs to the spermadhesin family. Seminal vesicle tissue, ampulla and weakly in tissue of epididymis.

It localises to the secreted. Stimulates cell division and progesterone secretion of bovine granulosa cells in vitro in a potent and dose dependent manner. This protein appears to be a potent growth factor with effects on ovarian granulosa cells. This chain is Spermadhesin-1 (SPADH1), found in Bos taurus (Bovine).